A 319-amino-acid polypeptide reads, in one-letter code: Acetyl-coenzyme A carboxylase carboxyl transferase subunit alpha (319 aa).

Residues 31 to 292 (EIDSAIRSLR…KTYLSRQLSE (262 aa)) enclose the CoA carboxyltransferase C-terminal domain.

The protein belongs to the AccA family. Acetyl-CoA carboxylase is a heterohexamer composed of biotin carboxyl carrier protein (AccB), biotin carboxylase (AccC) and two subunits each of ACCase subunit alpha (AccA) and ACCase subunit beta (AccD).

The protein localises to the cytoplasm. The enzyme catalyses N(6)-carboxybiotinyl-L-lysyl-[protein] + acetyl-CoA = N(6)-biotinyl-L-lysyl-[protein] + malonyl-CoA. The protein operates within lipid metabolism; malonyl-CoA biosynthesis; malonyl-CoA from acetyl-CoA: step 1/1. Its function is as follows. Component of the acetyl coenzyme A carboxylase (ACC) complex. First, biotin carboxylase catalyzes the carboxylation of biotin on its carrier protein (BCCP) and then the CO(2) group is transferred by the carboxyltransferase to acetyl-CoA to form malonyl-CoA. This Rhodopirellula baltica (strain DSM 10527 / NCIMB 13988 / SH1) protein is Acetyl-coenzyme A carboxylase carboxyl transferase subunit alpha.